The sequence spans 413 residues: Peptide chain release factor 1, mitochondrial (413 aa).

The transit peptide at 1 to 40 (MRVLIRPNFLSNLIRYCSRGTHSHDRSLRSVLSSNMIRLY) directs the protein to the mitochondrion. Residue Gln-287 is modified to N5-methylglutamine.

This sequence belongs to the prokaryotic/mitochondrial release factor family. Methylation increases the termination efficiency of RF1. Mostly expressed in seedlings, stems and adult plants, and, to a lower extent, in siliques. Barely detected in etiolated seedlings and roots.

It is found in the mitochondrion. Peptide chain release factor 1 directs the termination of translation in response to the peptide chain termination codons UAG and UAA in mitochondria. The polypeptide is Peptide chain release factor 1, mitochondrial (Arabidopsis thaliana (Mouse-ear cress)).